The chain runs to 490 residues: MSRYGLQKLYINGAYTDSTSGDTFDAVNPANGECIAQLQAANAQDVDKAVAAAKQGQPVWAAMTAMERSRILRRAVDILRDRNDELAAIETADTGKPLSETRSVDIVTGADVLEYYAGLIPALEGQQIPLRGSAFVYTRREPLGVVAGIGAWNYPLQIALWKSAPALAAGNAMIFKPSEVTSLTALKLAGIYTEAGLPAGVFNVLTGSGDQVGQMLTEHPGIAKVSFTGGIASGKKVMANAAGSTLKDVTMELGGKSPLIIFADADLDKAADIAMMANFYSSGQVCTNGTRVFVPQALQAAFEQKIVERVKRIHIGDPSDERTNFGPLVSFQHRDSVMRYIDSGKREGATLLIGGYSLTEGALAHGAYVAPTVFTHCRDDMQIVREEIFGPVMSILSYQSEEEVIRRANDTEYGLAAGVVTQDLNRAHRVIHQLQAGICWINTWGESAPEMPVGGYKHSGVGRENGISTLEHYTQIKSIQVELSSFNSVF.

Asp-93 serves as a coordination point for K(+). 150-152 provides a ligand contact to NAD(+); it reads GAW. Residue Lys-162 is the Charge relay system of the active site. 176 to 179 is a binding site for NAD(+); the sequence is KPSE. K(+) is bound at residue Val-180. NAD(+) is bound at residue 230 to 233; that stretch reads GIAS. Residue Leu-246 coordinates K(+). The active-site Proton acceptor is Glu-252. Positions 254, 286, and 387 each coordinate NAD(+). Cys-286 acts as the Nucleophile in catalysis. Cys-286 is subject to Cysteine sulfenic acid (-SOH). K(+) contacts are provided by Lys-457 and Gly-460. Glu-464 functions as the Charge relay system in the catalytic mechanism.

This sequence belongs to the aldehyde dehydrogenase family. As to quaternary structure, dimer of dimers. K(+) is required as a cofactor.

The catalysed reaction is betaine aldehyde + NAD(+) + H2O = glycine betaine + NADH + 2 H(+). It participates in amine and polyamine biosynthesis; betaine biosynthesis via choline pathway; betaine from betaine aldehyde: step 1/1. In terms of biological role, involved in the biosynthesis of the osmoprotectant glycine betaine. Catalyzes the irreversible oxidation of betaine aldehyde to the corresponding acid. The protein is Betaine aldehyde dehydrogenase of Yersinia pseudotuberculosis serotype IB (strain PB1/+).